A 100-amino-acid chain; its full sequence is Large ribosomal subunit protein uL23 (100 aa).

It belongs to the universal ribosomal protein uL23 family. Part of the 50S ribosomal subunit. Contacts protein L29, and trigger factor when it is bound to the ribosome.

In terms of biological role, one of the early assembly proteins it binds 23S rRNA. One of the proteins that surrounds the polypeptide exit tunnel on the outside of the ribosome. Forms the main docking site for trigger factor binding to the ribosome. This is Large ribosomal subunit protein uL23 from Pectobacterium atrosepticum (strain SCRI 1043 / ATCC BAA-672) (Erwinia carotovora subsp. atroseptica).